Here is a 629-residue protein sequence, read N- to C-terminus: 1-deoxy-D-xylulose-5-phosphate synthase (629 aa).

Residues H72 and 113 to 115 each bind thiamine diphosphate; that span reads GHA. D144 lines the Mg(2+) pocket. Thiamine diphosphate-binding positions include 145–146, N174, Y287, and E370; that span reads GA. Residue N174 participates in Mg(2+) binding.

Belongs to the transketolase family. DXPS subfamily. In terms of assembly, homodimer. The cofactor is Mg(2+). Thiamine diphosphate is required as a cofactor.

It carries out the reaction D-glyceraldehyde 3-phosphate + pyruvate + H(+) = 1-deoxy-D-xylulose 5-phosphate + CO2. It functions in the pathway metabolic intermediate biosynthesis; 1-deoxy-D-xylulose 5-phosphate biosynthesis; 1-deoxy-D-xylulose 5-phosphate from D-glyceraldehyde 3-phosphate and pyruvate: step 1/1. Catalyzes the acyloin condensation reaction between C atoms 2 and 3 of pyruvate and glyceraldehyde 3-phosphate to yield 1-deoxy-D-xylulose-5-phosphate (DXP). This is 1-deoxy-D-xylulose-5-phosphate synthase from Prochlorococcus marinus (strain MIT 9312).